A 384-amino-acid polypeptide reads, in one-letter code: Mannitol-1-phosphate 5-dehydrogenase (384 aa).

NAD(+) is bound at residue 3 to 14 (ALHFGAGNIGRG).

It belongs to the mannitol dehydrogenase family.

It carries out the reaction D-mannitol 1-phosphate + NAD(+) = beta-D-fructose 6-phosphate + NADH + H(+). The sequence is that of Mannitol-1-phosphate 5-dehydrogenase (mtlD) from Clostridium acetobutylicum (strain ATCC 824 / DSM 792 / JCM 1419 / IAM 19013 / LMG 5710 / NBRC 13948 / NRRL B-527 / VKM B-1787 / 2291 / W).